The sequence spans 676 residues: MESSRGPPRVKNKAPAPIQISAEQLLREAVDRQEPALQAPTQRFADLEELHEYQGRKRKEFEDYVRRNRLNMNNWMRYASWELEQKEFRRARSIFERALDVNPTSVVLWIRYIESEMRNRNINHARNLLDRAVTILPRVDKFWYKYVYMEETLGNIQGTRQVFERWMSWEPDEGAWSAYIKLEKRYNEFERARAIFQRFTIVHPEPRNWIKWARFEEEYGTSDLVREVYGMAIETLGEDFMDEKLFIAYAKFEAKLKEYERARAIYKYALDRLPRSKAMALHKAYTTFEKQFGDREGVEDVILSKRRVQYEEQLKENPRNYDVWFDFARLEETSGDPDRVRDIYERAIAQIPPSQEKRHWRRYIYLWIFYAIWEEMEAKDVDRARQIYTECLKLIPHKKFTFAKIWLLKAQFDIRQMDLQAARKTLGQAIGMCPKDKLFRGYIDLERQLFEFVRCRTLYEKQIEWNPANSQSWIKYAELERGLDDSERARAIFELGIDQPMLDMPELVWKAYIDFEEYEGEYDRVRQLYERLLQKTDHVKVWINYARFEINVPEEEEEEEEEEEEERPVSDEAKRRARAVFERAHKVFKEKEMKEERVELLNAWRAFEHTHGSPEDIKKIEEQMPRRVKKRRKLDDDRYEEYMDYVFPADDQAAASLTKILQAAHRWKQTGGQVVP.

14 HAT repeats span residues 52–84 (EYQG…WELE), 86–118 (KEFR…SEMR), 120–152 (RNIN…MEET), 154–185 (GNIQ…LEKR), 187–218 (NEFE…FEEE), 220–255 (GTSD…FEAK), 257–291 (KEYE…FEKQ), 301–333 (VILS…LEET), 335–369 (GDPD…LWIF), 379–415 (KDVD…FDIR), 417–448 (MDLQ…LERQ), 450–482 (FEFV…LERG), 484–518 (DDSE…FEEY), and 520–551 (GEYD…FEIN). The span at 554–566 (EEEEEEEEEEEEE) shows a compositional bias: acidic residues. The tract at residues 554-573 (EEEEEEEEEEEEERPVSDEA) is disordered. The HAT 15 repeat unit spans residues 572–610 (EAKRRARAVFERAHKVFKEKEMKEERVELLNAWRAFEHT).

The protein belongs to the crooked-neck family. In terms of assembly, associated with the spliceosome.

The protein resides in the nucleus. Functionally, involved in pre-mRNA splicing and cell cycle progression. Required for the spliceosome assembly and initiation of the DNA replication. The polypeptide is Pre-mRNA-splicing factor clf1 (clf1) (Aspergillus fumigatus (strain ATCC MYA-4609 / CBS 101355 / FGSC A1100 / Af293) (Neosartorya fumigata)).